A 437-amino-acid polypeptide reads, in one-letter code: Sodium/bile acid cotransporter 4 (437 aa).

At 1 to 103 (MDGLDNTTRL…PPFWDTPLNH (103 aa)) the chain is on the extracellular side. Residues Asn-6, Asn-20, and Asn-26 are each glycosylated (N-linked (GlcNAc...) asparagine). A disordered region spans residues 16–84 (LLPDNLTLSP…GGVAGQDSST (69 aa)). Residues 21–50 (LTLSPNASSTSASTLSPLPVTSSPSPGLSL) show a composition bias toward low complexity. The helical transmembrane segment at 104-124 (GLNVFVGAALCITMLGLGCTV) threads the bilayer. Residues 125 to 140 (DVNHFGAHVRRPVGAL) are Cytoplasmic-facing. A helical membrane pass occupies residues 141–161 (LAALCQFGFLPLLAFLLALAF). The Extracellular segment spans residues 162–197 (KLDEVAAVAVLLCGCCPGGNLSNLMSLLVDGDMNLS). Asn-181 and Asn-195 each carry an N-linked (GlcNAc...) asparagine glycan. The chain crosses the membrane as a helical span at residues 198 to 218 (IIMTISSTLLALVLMPLCLWI). The Cytoplasmic portion of the chain corresponds to 219–233 (YSRAWINTPLVQLLP). A helical transmembrane segment spans residues 234 to 254 (LGAVTLTLCSTLIPIGLGVFI). Residues 255 to 267 (RYKYNRVADYIVK) are Extracellular-facing. The helical transmembrane segment at 268-288 (VSLCSLLVTLVVLFIMTGTML) threads the bilayer. Over 289–291 (GPE) the chain is Cytoplasmic. Residues 292–312 (LLASIPAAVYVVAIFMPLAGY) traverse the membrane as a helical segment. At 313–360 (ASGYGLATLFHLPPNCKRTVCLETGSQNVQLCTAILKLAFPPRFIGSM) the chain is on the extracellular side. Residues 361–381 (YMFPLLYALFQSAEAGVFVLI) traverse the membrane as a helical segment. Residues 382–437 (YKMYGSEILHKREALDEDDDTDISYKKLKEEELADTSYGTVGTDDLVLMETTQTSL) are Cytoplasmic-facing.

The protein belongs to the bile acid:sodium symporter (BASS) (TC 2.A.28) family. Activated following N-terminal proteolytic cleavage by thrombin and/or proteases. As to expression, mainly expressed in the central nervous system cholinergic neurons. Expressed (at protein level) in motor regions of the spinal cord and rhombencephalon, in mesopontine cholinergic neurons, the medial habenula, cholinergic areas of the forebrain, and the gut myenteric plexus.

The protein resides in the cell membrane. Transporter for bile acids. This chain is Sodium/bile acid cotransporter 4 (Slc10a4), found in Rattus norvegicus (Rat).